Reading from the N-terminus, the 483-residue chain is Malonate-semialdehyde dehydrogenase 2 (483 aa).

NAD(+)-binding residues include Phe152, Lys176, Glu179, Arg180, and Ser229. Cys284 functions as the Nucleophile in the catalytic mechanism. Glu384 is an NAD(+) binding site.

The protein belongs to the aldehyde dehydrogenase family. IolA subfamily. Homotetramer.

It carries out the reaction 3-oxopropanoate + NAD(+) + CoA + H2O = hydrogencarbonate + acetyl-CoA + NADH + H(+). The catalysed reaction is 2-methyl-3-oxopropanoate + NAD(+) + CoA + H2O = propanoyl-CoA + hydrogencarbonate + NADH + H(+). Its pathway is polyol metabolism; myo-inositol degradation into acetyl-CoA; acetyl-CoA from myo-inositol: step 7/7. Catalyzes the oxidation of malonate semialdehyde (MSA) and methylmalonate semialdehyde (MMSA) into acetyl-CoA and propanoyl-CoA, respectively. Is involved in a myo-inositol catabolic pathway. Bicarbonate, and not CO2, is the end-product of the enzymatic reaction. The chain is Malonate-semialdehyde dehydrogenase 2 from Bacillus mycoides (strain KBAB4) (Bacillus weihenstephanensis).